A 360-amino-acid chain; its full sequence is Methyltransferase pvhD (360 aa).

S-adenosyl-L-methionine contacts are provided by residues 201–202 (SG), D227, 251–252 (DL), R267, and R268.

It belongs to the class I-like SAM-binding methyltransferase superfamily. Cation-independent O-methyltransferase family.

Its pathway is secondary metabolite biosynthesis. In terms of biological role, methyltransferase; part of the gene cluster that mediates the biosynthesis of varicidin A, an antifungal natural product containing a cis-octahydrodecalin core. The PKS module of pvhA together with the enoylreductase pvhC catalyze the formation of the polyketide unit which is then conjugated to L-isoleucine by the condensation domain of the NRPS module. Activity of the Dieckmann cyclase domain (RED) of pvhA results in release of an acyclic tetramate. The cytochrome P450 monooxygenase pvhE then catalyzes the oxidation of the C21 methyl group to a to carboxylate group. The methyltransferase pvhD then further methylates the pvhE product. The Diels-Alderase pvhB is able to catalyze Diels-Alder cycloaddition using both pvhE and pvhD products as substrates to form the decalin ring, yielding varicidin B and A, respectively. In Talaromyces variabilis (Penicillium variabile), this protein is Methyltransferase pvhD.